The following is a 214-amino-acid chain: Large ribosomal subunit protein uL3 (214 aa).

The residue at position 153 (Q153) is an N5-methylglutamine.

Belongs to the universal ribosomal protein uL3 family. Part of the 50S ribosomal subunit. Forms a cluster with proteins L14 and L19. Post-translationally, methylated by PrmB.

One of the primary rRNA binding proteins, it binds directly near the 3'-end of the 23S rRNA, where it nucleates assembly of the 50S subunit. This chain is Large ribosomal subunit protein uL3, found in Aromatoleum aromaticum (strain DSM 19018 / LMG 30748 / EbN1) (Azoarcus sp. (strain EbN1)).